The sequence spans 609 residues: Putative transcriptional regulatory protein y4pA (609 aa).

Positions 313-533 constitute a Sigma-54 factor interaction domain; sequence IVGRSPSIQQ…LRSVLETAAI (221 aa). 395–404 provides a ligand contact to ATP; that stretch reads HPKATLLIES. The segment at residues 578-597 is a DNA-binding region (H-T-H motif); sequence RGEAARYLGISRKTLYNKMR.

Its function is as follows. Probable transcriptional regulator that acts in conjunction with sigma-54. This Sinorhizobium fredii (strain NBRC 101917 / NGR234) protein is Putative transcriptional regulatory protein y4pA.